The chain runs to 258 residues: MILVLDVGNTNIVLGIYKNKELIANWRLATDNKRTADEYGIQVIELFSHNNLSFSDIEGVIISSVVPNIMYSLEHMISKYFNIKPIIVGPGVKTGINIKYDNPKEVGADRIVNAVAAHEIYKKPLIIIDFGTATTFCAVTKEANYLGGTICPGIKISSDALFDKAAKLPRVELVKTPGVICKNTVASIQSGIIYGYAGQVDYIVSKMKKEMIDLGEEEPFVVATGGFAKLISEESKSIDEINAILTLEGLRVIYEKNK.

6–13 is a binding site for ATP; the sequence is DVGNTNIV. Substrate-binding positions include Y100 and 107–110; that span reads GADR. Catalysis depends on D109, which acts as the Proton acceptor. D129 lines the K(+) pocket. T132 is a binding site for ATP. T184 serves as a coordination point for substrate.

Belongs to the type III pantothenate kinase family. Homodimer. The cofactor is NH4(+). It depends on K(+) as a cofactor.

It is found in the cytoplasm. It catalyses the reaction (R)-pantothenate + ATP = (R)-4'-phosphopantothenate + ADP + H(+). It participates in cofactor biosynthesis; coenzyme A biosynthesis; CoA from (R)-pantothenate: step 1/5. Catalyzes the phosphorylation of pantothenate (Pan), the first step in CoA biosynthesis. In Clostridium botulinum (strain Loch Maree / Type A3), this protein is Type III pantothenate kinase.